Reading from the N-terminus, the 453-residue chain is Putative amino acid/polyamine transporter MPH_07630_2 (453 aa).

3 consecutive transmembrane segments (helical) span residues 2–21 (IGFSFSIVTSWSALSGVLVV), 30–50 (VMIWSWVGVCAVSLAVAYSMA), and 81–101 (VCGWFMLIGILSMGAVNNFIA). Asn110 carries an N-linked (GlcNAc...) asparagine glycan. A run of 2 helical transmembrane segments spans residues 121–141 (WHAVLVAYLICIVAALSSIFL) and 151–171 (AILIWNICSFFICFITILATN). N-linked (GlcNAc...) asparagine glycosylation occurs at Asn186. 2 helical membrane-spanning segments follow: residues 193–213 (AYAAIIGILQSAFGMCCYDAP) and 231–251 (IVMSVWLGFLTGFVFLISLCF). N-linked (GlcNAc...) asparagine glycosylation is present at Asn274. The next 4 helical transmembrane spans lie at 277 to 297 (GSVAGTCALTSLITVVALVCA), 330 to 350 (LGVPVAGILATAAVQAAFNSI), 358 to 378 (FNTVISIATEGFYVSYAIPLL), and 403 to 423 (GLLANVVGFTYLAFAVITFNF). Asn435 carries an N-linked (GlcNAc...) asparagine glycan.

It belongs to the amino acid-polyamine-organocation (APC) superfamily.

It localises to the membrane. This chain is Putative amino acid/polyamine transporter MPH_07630_2, found in Macrophomina phaseolina (strain MS6) (Charcoal rot fungus).